Reading from the N-terminus, the 117-residue chain is V-type sodium ATPase subunit F (117 aa).

A disordered region spans residues 1 to 20; that stretch reads MARILTRIKEAEENNQKKEE. Basic and acidic residues predominate over residues 7-20; it reads RIKEAEENNQKKEE.

Belongs to the V-ATPase G subunit family.

In terms of biological role, involved in ATP-driven sodium extrusion. This chain is V-type sodium ATPase subunit F (ntpF), found in Enterococcus hirae (strain ATCC 9790 / DSM 20160 / JCM 8729 / LMG 6399 / NBRC 3181 / NCIMB 6459 / NCDO 1258 / NCTC 12367 / WDCM 00089 / R).